A 477-amino-acid chain; its full sequence is Aspartyl/glutamyl-tRNA(Asn/Gln) amidotransferase subunit B (477 aa).

Belongs to the GatB/GatE family. GatB subfamily. In terms of assembly, heterotrimer of A, B and C subunits.

It catalyses the reaction L-glutamyl-tRNA(Gln) + L-glutamine + ATP + H2O = L-glutaminyl-tRNA(Gln) + L-glutamate + ADP + phosphate + H(+). The catalysed reaction is L-aspartyl-tRNA(Asn) + L-glutamine + ATP + H2O = L-asparaginyl-tRNA(Asn) + L-glutamate + ADP + phosphate + 2 H(+). Functionally, allows the formation of correctly charged Asn-tRNA(Asn) or Gln-tRNA(Gln) through the transamidation of misacylated Asp-tRNA(Asn) or Glu-tRNA(Gln) in organisms which lack either or both of asparaginyl-tRNA or glutaminyl-tRNA synthetases. The reaction takes place in the presence of glutamine and ATP through an activated phospho-Asp-tRNA(Asn) or phospho-Glu-tRNA(Gln). The protein is Aspartyl/glutamyl-tRNA(Asn/Gln) amidotransferase subunit B of Legionella pneumophila (strain Lens).